We begin with the raw amino-acid sequence, 106 residues long: Putative protein SH (106 aa).

Residues 48–106 form a disordered region; it reads HSQQNNSGHQFGDRFHSKGHQDTEGRILWKEASTRTTDSTETADTQLVQRQGNGGICLS. A compositionally biased stretch (basic and acidic residues) spans 58–80; it reads FGDRFHSKGHQDTEGRILWKEAS. The segment covering 81–92 has biased composition (low complexity); that stretch reads TRTTDSTETADT.

In terms of tissue distribution, heart.

Its function is as follows. May be involved with the regulation of GNRH gene expression. It is not known if this protein is transcribed. This chain is Putative protein SH, found in Rattus norvegicus (Rat).